Consider the following 358-residue polypeptide: Holliday junction branch migration complex subunit RuvB (358 aa).

The disordered stretch occupies residues 1–24; sequence MSIQTDDFAAPPPKRILSGAPASP. The interval 5 to 194 is large ATPase domain (RuvB-L); sequence TDDFAAPPPK…FGIVARLEFY (190 aa). ATP contacts are provided by residues Leu-33, Arg-34, Gly-75, Lys-78, Thr-79, Thr-80, 141–143, Arg-184, Tyr-194, and Arg-231; that span reads EDY. Residue Thr-79 participates in Mg(2+) binding. The segment at 195 to 265 is small ATPAse domain (RuvB-S); it reads SPEELASIVR…IAHRALVMLD (71 aa). The segment at 268-358 is head domain (RuvB-H); the sequence is PQGFDLMDRK…GDMFGAMRPE (91 aa). DNA contacts are provided by Arg-304, Arg-323, and Arg-328.

This sequence belongs to the RuvB family. In terms of assembly, homohexamer. Forms an RuvA(8)-RuvB(12)-Holliday junction (HJ) complex. HJ DNA is sandwiched between 2 RuvA tetramers; dsDNA enters through RuvA and exits via RuvB. An RuvB hexamer assembles on each DNA strand where it exits the tetramer. Each RuvB hexamer is contacted by two RuvA subunits (via domain III) on 2 adjacent RuvB subunits; this complex drives branch migration. In the full resolvosome a probable DNA-RuvA(4)-RuvB(12)-RuvC(2) complex forms which resolves the HJ.

It is found in the cytoplasm. It carries out the reaction ATP + H2O = ADP + phosphate + H(+). The RuvA-RuvB-RuvC complex processes Holliday junction (HJ) DNA during genetic recombination and DNA repair, while the RuvA-RuvB complex plays an important role in the rescue of blocked DNA replication forks via replication fork reversal (RFR). RuvA specifically binds to HJ cruciform DNA, conferring on it an open structure. The RuvB hexamer acts as an ATP-dependent pump, pulling dsDNA into and through the RuvAB complex. RuvB forms 2 homohexamers on either side of HJ DNA bound by 1 or 2 RuvA tetramers; 4 subunits per hexamer contact DNA at a time. Coordinated motions by a converter formed by DNA-disengaged RuvB subunits stimulates ATP hydrolysis and nucleotide exchange. Immobilization of the converter enables RuvB to convert the ATP-contained energy into a lever motion, pulling 2 nucleotides of DNA out of the RuvA tetramer per ATP hydrolyzed, thus driving DNA branch migration. The RuvB motors rotate together with the DNA substrate, which together with the progressing nucleotide cycle form the mechanistic basis for DNA recombination by continuous HJ branch migration. Branch migration allows RuvC to scan DNA until it finds its consensus sequence, where it cleaves and resolves cruciform DNA. The chain is Holliday junction branch migration complex subunit RuvB from Albidiferax ferrireducens (strain ATCC BAA-621 / DSM 15236 / T118) (Rhodoferax ferrireducens).